The sequence spans 650 residues: Macrolide export ATP-binding/permease protein MacB (650 aa).

The ABC transporter domain occupies 2–238 (IDIKGIRKSY…PTTAQEKRQE (237 aa)). 38-45 (GPSGSGKS) serves as a coordination point for ATP. Helical transmembrane passes span 267–287 (GLSM…LALG), 531–551 (IAAI…LVSV), 580–600 (IVVS…FSLL), and 610–630 (VVSA…GIVF).

The protein belongs to the ABC transporter superfamily. Macrolide exporter (TC 3.A.1.122) family. As to quaternary structure, homodimer.

It is found in the cell inner membrane. Its function is as follows. Non-canonical ABC transporter that contains transmembrane domains (TMD), which form a pore in the inner membrane, and an ATP-binding domain (NBD), which is responsible for energy generation. Confers resistance against macrolides. The polypeptide is Macrolide export ATP-binding/permease protein MacB (Bdellovibrio bacteriovorus (strain ATCC 15356 / DSM 50701 / NCIMB 9529 / HD100)).